We begin with the raw amino-acid sequence, 337 residues long: Viral cathepsin (337 aa).

The signal sequence occupies residues 1 to 18; it reads MYLIYYYTIIAVATASIA. The propeptide at 19–126 is activation peptide; it reads NEKIFYDIDS…VTVAGPSART (108 aa). 3 disulfide bridges follow: C147-C188, C181-C221, and C276-C324. C150 is a catalytic residue. Active-site residues include H283 and N303.

The protein belongs to the peptidase C1 family. Post-translationally, synthesized as an inactive proenzyme and activated by proteolytic removal of the inhibitory propeptide.

It carries out the reaction Endopeptidase of broad specificity, hydrolyzing substrates of both cathepsin L and cathepsin B.. Functionally, cysteine protease that plays an essential role in host liquefaction to facilitate horizontal transmission of the virus. May participate in the degradation of foreign protein expressed by the baculovirus system. This is Viral cathepsin (VCATH) from Spodoptera litura multicapsid nucleopolyhedrovirus (SpltMNPV).